The sequence spans 1348 residues: Putative late blight resistance protein homolog R1B-12 (1348 aa).

2 coiled-coil regions span residues 446–469 (RYSDSLAFLKNQLQVIQTEFESLQ) and 561–583 (PRMNEEIVGFEDVIENLRKKLLN). Residues 552–848 (RTSSQLTRTP…ISESFIKSCE (297 aa)) form the NB-ARC domain. 595–602 (GMPGLGKT) is a binding site for ATP. LRR repeat units follow at residues 977–1001 (FKFLKVLDLEHQFFIDFIPTELLYL), 1051–1074 (LRHLHIPYFSTEKEEALLENSAKL), 1123–1147 (PITLEILKLYRSSDFKVIPFCISAQ), 1151–1170 (YLKLSGFYLNSQYLSETADH), 1171–1194 (LKHLEVLKLHNIEFGGHSEWEVSN), 1197–1219 (FPQLKILKLEYVSLMKLIVADDA), 1220–1244 (FPNLEQLVLHDCEDLMEIPSCFMDI), and 1309–1332 (LPGIQSIAVDSNEKKFIVIGDMDA). The HMA domain maps to 1284 to 1348 (VKKMVLKFDT…VGKLINRGML (65 aa)).

This sequence belongs to the disease resistance NB-LRR family.

Its subcellular location is the cytoplasm. The protein resides in the membrane. Confers resistance to late blight (Phytophthora infestans) races carrying the avirulence gene Avr1. Resistance proteins guard the plant against pathogens that contain an appropriate avirulence protein via an indirect interaction with this avirulence protein. That triggers a defense system including the hypersensitive response, which restricts the pathogen growth. The protein is Putative late blight resistance protein homolog R1B-12 (R1B-12) of Solanum demissum (Wild potato).